The chain runs to 396 residues: Elongation factor Tu (396 aa).

The region spanning 10–206 (KPHVNIGTIG…AVDEYIPDPV (197 aa)) is the tr-type G domain. Positions 19 to 26 (GHVDHGKT) are G1. Residue 19 to 26 (GHVDHGKT) coordinates GTP. Thr26 contacts Mg(2+). The tract at residues 62-66 (GITIN) is G2. The G3 stretch occupies residues 83–86 (DAPG). Residues 83–87 (DAPGH) and 138–141 (NKSD) contribute to the GTP site. The tract at residues 138–141 (NKSD) is G4. Residues 176–178 (SGL) are G5.

This sequence belongs to the TRAFAC class translation factor GTPase superfamily. Classic translation factor GTPase family. EF-Tu/EF-1A subfamily. In terms of assembly, monomer.

The protein resides in the cytoplasm. The catalysed reaction is GTP + H2O = GDP + phosphate + H(+). Functionally, GTP hydrolase that promotes the GTP-dependent binding of aminoacyl-tRNA to the A-site of ribosomes during protein biosynthesis. The sequence is that of Elongation factor Tu from Micrococcus luteus (strain ATCC 4698 / DSM 20030 / JCM 1464 / CCM 169 / CCUG 5858 / IAM 1056 / NBRC 3333 / NCIMB 9278 / NCTC 2665 / VKM Ac-2230) (Micrococcus lysodeikticus).